The sequence spans 554 residues: Capsid vertex component 2 (554 aa).

An interaction with major capsid protein/MCP region spans residues 1–46; that stretch reads MTQLSLFYQFPIQPIFEGHVRNTLICTEEDMQQLQNLGIRKLRKEK.

The protein belongs to the herpesviridae CVC2 protein family. Heterodimerizes with CVC1. Interacts with major capsid protein/MCP and triplex capsid protein 1/TRX1 at the pentamer vertices. Interacts with the large tegument protein/LTP.

It is found in the virion. It localises to the host nucleus. Functionally, capsid vertex-specific component that plays a role during viral DNA encapsidation, assuring correct genome cleavage and presumably stabilizing capsids that contain full-length viral genomes. Participates in the interaction between the capsid and the tegument through interaction with the large tegument protein/LTP. This chain is Capsid vertex component 2, found in Human herpesvirus 7 (strain JI) (HHV-7).